Reading from the N-terminus, the 349-residue chain is E3 ubiquitin-protein ligase SINA-like 10 (349 aa).

The disordered stretch occupies residues 1-77; that stretch reads MARFSVCGGD…STSDDSDREV (77 aa). The RING-type; degenerate zinc finger occupies 113-149; that stretch reads CPICCEPLKIPIFQCDNGHLACTLCCTKVRNRCPSCT. Residues 163–344 form an SBD region; it reads VIEASRVSCL…NLQIWIGHGR (182 aa). The SIAH-type zinc-finger motif lies at 166–224; the sequence is ASRVSCLNAKYGCKESTSYGNRFSHEQVCVFTPCSCPILDCHYTGYYKDLNNHVRAEHK. Zn(2+) contacts are provided by cysteine 171, cysteine 178, histidine 190, cysteine 194, cysteine 201, cysteine 206, histidine 218, and histidine 223.

The protein belongs to the SINA (Seven in absentia) family.

The catalysed reaction is S-ubiquitinyl-[E2 ubiquitin-conjugating enzyme]-L-cysteine + [acceptor protein]-L-lysine = [E2 ubiquitin-conjugating enzyme]-L-cysteine + N(6)-ubiquitinyl-[acceptor protein]-L-lysine.. It participates in protein modification; protein ubiquitination. Its function is as follows. E3 ubiquitin-protein ligase that mediates ubiquitination and subsequent proteasomal degradation of target proteins. E3 ubiquitin ligases accept ubiquitin from an E2 ubiquitin-conjugating enzyme in the form of a thioester and then directly transfers the ubiquitin to targeted substrates. It probably triggers the ubiquitin-mediated degradation of different substrates. The polypeptide is E3 ubiquitin-protein ligase SINA-like 10 (Arabidopsis thaliana (Mouse-ear cress)).